The primary structure comprises 113 residues: Large ribosomal subunit protein bL19 (113 aa).

The protein belongs to the bacterial ribosomal protein bL19 family.

Its function is as follows. This protein is located at the 30S-50S ribosomal subunit interface and may play a role in the structure and function of the aminoacyl-tRNA binding site. This Mycobacterium avium (strain 104) protein is Large ribosomal subunit protein bL19.